Consider the following 227-residue polypeptide: Homeobox-leucine zipper protein ATHB-54 (227 aa).

The homeobox DNA-binding region spans 65-124; sequence EITKKRKLTPIQLRLLEESFEEEKRLEPDRKLWLAEKLGLQPSQVAVWFQNRRARYKTKQ. The interval 125–153 is leucine-zipper; that stretch reads LEHDCDSLKASYAKLKTDWDILFVQNQTL. Positions 175–198 are disordered; sequence IERKRLGEEGSSVKSDNTQYSEEE.

This sequence belongs to the HD-ZIP homeobox family. Class I subfamily. In terms of tissue distribution, predominantly expressed in flowers and siliques.

Its subcellular location is the nucleus. Probable transcription factor. The sequence is that of Homeobox-leucine zipper protein ATHB-54 (ATHB-54) from Arabidopsis thaliana (Mouse-ear cress).